A 201-amino-acid chain; its full sequence is Recombination protein RecR (201 aa).

The C4-type zinc-finger motif lies at 60–75 (CKSCGNIDTRNPCTVC). One can recognise a Toprim domain in the interval 83–178 (SIIVVVADVA…KVTRLAHGVP (96 aa)).

It belongs to the RecR family.

May play a role in DNA repair. It seems to be involved in an RecBC-independent recombinational process of DNA repair. It may act with RecF and RecO. The polypeptide is Recombination protein RecR (Rhodopseudomonas palustris (strain BisB5)).